The primary structure comprises 410 residues: Histone-lysine N-methyltransferase SUV39H2 (410 aa).

The 59-residue stretch at 47-105 (YEVEYLCDYKVVKDMEYYLVKWKGWPDSTNTWEPLQNLKCPLLLQQFSNDKHNYLSQVK) folds into the Chromo domain. One can recognise a Pre-SET domain in the interval 189–247 (FGCSCTDCFFQKCCPAEAGVLLAYNKNQQIKIPPGTPIYECNSRCQCGPDCPNRIVQKG). Zn(2+) is bound by residues C191, C193, C196, C201, C202, C229, C233, C235, and C239. The SET domain maps to 250-373 (YSLCIFRTSN…AGEELTFDYQ (124 aa)). S-adenosyl-L-methionine contacts are provided by residues 261-263 (RGW), Y304, and 330-331 (NH). C333 contributes to the Zn(2+) binding site. Phosphoserine occurs at positions 381, 384, and 388. Residues 394 to 410 (VRTVCKCGAVTCRGYLN) form the Post-SET domain. Zn(2+)-binding residues include C398, C400, and C405.

Belongs to the class V-like SAM-binding methyltransferase superfamily. Histone-lysine methyltransferase family. Suvar3-9 subfamily. In terms of assembly, interacts with SMAD5. The large PER complex involved in the histone methylation is composed of at least PER2, CBX3, TRIM28, SUV39H1 and/or SUV39H2; CBX3 mediates the formation of the complex. Ubiquitinated by the DCX(DCAF13) E3 ubiquitin ligase complex, leading to its degradation.

The protein localises to the nucleus. It localises to the chromosome. It is found in the centromere. It catalyses the reaction L-lysyl(9)-[histone H3] + 3 S-adenosyl-L-methionine = N(6),N(6),N(6)-trimethyl-L-lysyl(9)-[histone H3] + 3 S-adenosyl-L-homocysteine + 3 H(+). Its function is as follows. Histone methyltransferase that specifically trimethylates 'Lys-9' of histone H3 using monomethylated H3 'Lys-9' as substrate. H3 'Lys-9' trimethylation represents a specific tag for epigenetic transcriptional repression by recruiting HP1 (CBX1, CBX3 and/or CBX5) proteins to methylated histones. Mainly functions in heterochromatin regions, thereby playing a central role in the establishment of constitutive heterochromatin at pericentric and telomere regions. H3 'Lys-9' trimethylation is also required to direct DNA methylation at pericentric repeats. SUV39H1 is targeted to histone H3 via its interaction with RB1 and is involved in many processes, such as cell cycle regulation, transcriptional repression and regulation of telomere length. May participate in regulation of higher-order chromatin organization during spermatogenesis. Recruited by the large PER complex to the E-box elements of the circadian target genes such as PER2 itself or PER1, contributes to the conversion of local chromatin to a heterochromatin-like repressive state through H3 'Lys-9' trimethylation. The sequence is that of Histone-lysine N-methyltransferase SUV39H2 (SUV39H2) from Macaca fascicularis (Crab-eating macaque).